Reading from the N-terminus, the 712-residue chain is Lactoperoxidase (712 aa).

Residues 1-22 form the signal peptide; the sequence is MWVCLQLPVFLASVTLFEVAAS. Positions 23–100 are excised as a propeptide; the sequence is DTIAQAASTT…WEESLKRLRR (78 aa). N106 is a glycosylation site (N-linked (GlcNAc...) asparagine). Disulfide bonds link C123–C284, C132–C145, C246–C256, and C250–C274. An N-linked (GlcNAc...) asparagine glycan is attached at N212. D225 is a binding site for heme b. H226 serves as the catalytic Proton acceptor. Position 227 (D227) interacts with Ca(2+). Ca(2+) is bound by residues T301, F303, D305, and S307. S315 carries the phosphoserine modification. Residues N322 and N358 are each glycosylated (N-linked (GlcNAc...) asparagine). The cysteines at positions 354 and 365 are disulfide-linked. E375 contacts heme b. N449 is a glycosylation site (N-linked (GlcNAc...) asparagine). H468 lines the heme b pocket. A 3'-nitrotyrosine modification is found at Y482. 2 cysteine pairs are disulfide-bonded: C573/C630 and C671/C696.

It belongs to the peroxidase family. XPO subfamily. Ca(2+) is required as a cofactor. Heme b serves as cofactor. As to expression, mammary gland; milk.

Its subcellular location is the secreted. It localises to the cytoplasm. The catalysed reaction is 2 a phenolic donor + H2O2 = 2 a phenolic radical donor + 2 H2O. It carries out the reaction thiocyanate + H2O2 + H(+) = hypothiocyanous acid + H2O. It catalyses the reaction iodide + H2O2 = hypoiodite + H2O. In terms of biological role, heme-containing oxidoreductase which catalyzes the conversion of thiocyanate (SCN(-)) into antimicrobial agent hypothiocyanous acid (OSCN(-)) in the presence of hydrogen peroxide (H2O2). Also involved in the conversion of iodide (I(-)) into hypoiodite (IO(-)) in the presence of H2O2. Responsible for the inactivation of a wide range of micro-organisms and hence, important component of defense mechanism. The lactoperoxidase-SCN(-)-H2O2 system shows antibacterial properties against some streptococci strains. The lactoperoxidase-I(-)-H2O2 system shows antibacterial properties against E.coli. May protect the udder from infection and may promote growth in newborns. May be implicated in airway host defense against infection. May contribute to maintaining an appropriate H2O2 cellular level, therefore protecting cells from H2O2-caused injuries and inflammation. This Bos taurus (Bovine) protein is Lactoperoxidase (LPO).